A 618-amino-acid polypeptide reads, in one-letter code: Mitochondrial Rho GTPase 2 (618 aa).

The Cytoplasmic portion of the chain corresponds to 1-592 (MRRDVRILLL…ELHPSSFWLR (592 aa)). Positions 2–168 (RRDVRILLLG…FYYAQKAVLH (167 aa)) constitute a Miro 1 domain. GTP contacts are provided by Gly16, Lys17, Thr18, and Ser19. Thr18 is a Mg(2+) binding site. 2 residues coordinate Mg(2+): Pro35 and Asp57. Ser59 is a binding site for GTP. Lys96 is covalently cross-linked (Glycyl lysine isopeptide (Lys-Gly) (interchain with G-Cter in ubiquitin)). GTP-binding residues include Asn118, Lys119, Asp121, Ala149, and Lys150. A Glycyl lysine isopeptide (Lys-Gly) (interchain with G-Cter in ubiquitin) cross-link involves residue Lys119. Lys164 participates in a covalent cross-link: Glycyl lysine isopeptide (Lys-Gly) (interchain with G-Cter in ubiquitin). 2 consecutive EF-hand domains span residues 184–219 (ACAQ…CFGH) and 304–339 (LGYQ…FPAA). Residues Asp197, Asp199, Asp201, Glu208, Asp317, Asp319, Asp321, and Glu328 each contribute to the Ca(2+) site. The Miro 2 domain occupies 414 to 576 (RSVLLCKVVG…FTQLATMAAF (163 aa)). Residues Gly426, Gly428, Lys429, Ser430, and Ala431 each contribute to the GTP site. GDP-binding residues include Gly426, Gly428, Lys429, Ser430, and Ala431. Ser430 is a Mg(2+) binding site. Glu471 serves as a coordination point for Mg(2+). Positions 525, 527, and 556 each coordinate GTP. Residues Lys525, Asp527, and Cys556 each coordinate GDP. A helical; Anchor for type IV membrane protein membrane pass occupies residues 593 to 615 (GLLGVVGAAVAAVLSFSLYRVLV). Topologically, residues 616–618 (KSQ) are mitochondrial intermembrane.

It belongs to the mitochondrial Rho GTPase family. As to quaternary structure, homodimer. Interacts with the kinesin-binding proteins TRAK1/OIP106 and TRAK2/GRIF1, forming a link between mitochondria and the trafficking apparatus of the microtubules. Interacts with ARMCX3. Found in a complex with KIF5B, OGT, RHOT1 and TRAK1. Post-translationally, ubiquitinated by PRKN in a PINK1-dependent manner, leading to its degradation. Ubiquitously expressed. Highly expressed in heart, liver, skeletal muscle, kidney and pancreas.

It localises to the mitochondrion outer membrane. It catalyses the reaction GTP + H2O = GDP + phosphate + H(+). The catalysed reaction is ATP + H2O = ADP + phosphate + H(+). The enzyme catalyses UTP + H2O = UDP + phosphate + H(+). Atypical mitochondrial nucleoside-triphosphatase (NTPase) involved in mitochondrial trafficking. Probably involved in control of anterograde transport of mitochondria and their subcellular distribution. Can hydrolyze GTP. Can hydrolyze ATP and UTP. The polypeptide is Mitochondrial Rho GTPase 2 (RHOT2) (Homo sapiens (Human)).